A 452-amino-acid chain; its full sequence is Neuromedin-K receptor (452 aa).

At 1–71 (MASVPTGENW…TNQFVQPSWR (71 aa)) the chain is on the extracellular side. Residues N9, N23, N40, and N60 are each glycosylated (N-linked (GlcNAc...) asparagine). A helical membrane pass occupies residues 72–94 (IALWSLAYGLVVAVAVFGNLIVI). Residues 95–104 (WIILAHKRMR) are Cytoplasmic-facing. A helical transmembrane segment spans residues 105 to 126 (TVTNYFLVNLAFSDASVAAFNT). Residues 127 to 146 (LVNFIYGVHSEWYFGANYCR) are Extracellular-facing. C145 and C220 are disulfide-bonded. Residues 147–168 (FQNFFPITAVFASIYSMTAIAV) traverse the membrane as a helical segment. Residues 169 to 188 (DRYMAIIDPLKPRLSATATK) lie on the Cytoplasmic side of the membrane. The helical transmembrane segment at 189–209 (IVIGSIWILAFLLAFPQCLYS) threads the bilayer. Residues 210–232 (KIKVMPGRTLCYVQWPEGPKQHF) are Extracellular-facing. The chain crosses the membrane as a helical span at residues 233-257 (TYHIIVIILVYCFPLLIMGVTYTIV). At 258 to 286 (GITLWGGEIPGDTCDKYHEQLKAKRKVVK) the chain is on the cytoplasmic side. A helical membrane pass occupies residues 287 to 308 (MMIIVVVTFAICWLPYHVYFIL). Over 309-321 (TAIYQQLNRWKYI) the chain is Extracellular. A helical membrane pass occupies residues 322–346 (QQVYLASFWLAMSSTMYNPIIYCCL). The Cytoplasmic segment spans residues 347–452 (NKRFRAGFKR…SPYTSVDEYS (106 aa)). C361 carries S-palmitoyl cysteine lipidation. Positions 401–452 (DPSEGDPAKSSRKKRAVPRDPSANGCSHREFKSASTTSSFISSPYTSVDEYS) are disordered. Low complexity predominate over residues 433–452 (SASTTSSFISSPYTSVDEYS).

This sequence belongs to the G-protein coupled receptor 1 family. Post-translationally, the anchoring of this receptor to the plasma membrane is probably mediated by the palmitoylation of a cysteine residue.

It localises to the cell membrane. This is a receptor for the tachykinin neuropeptide neuromedin-K (neurokinin B). It is associated with G proteins that activate a phosphatidylinositol-calcium second messenger system. The polypeptide is Neuromedin-K receptor (Tacr3) (Mus musculus (Mouse)).